The chain runs to 134 residues: UPF0412 protein YaaI (134 aa).

The first 23 residues, 1–23, serve as a signal peptide directing secretion; sequence MKSVFTLSASLAISLLLCCTAQA.

This sequence belongs to the UPF0412 family.

In Escherichia coli (strain SMS-3-5 / SECEC), this protein is UPF0412 protein YaaI.